We begin with the raw amino-acid sequence, 201 residues long: Small ribosomal subunit protein uS4c (201 aa).

Residues 14-43 (RLGALPGLTSKRPRAGSDLRNQSRPGKKSQ) are disordered. The region spanning 89 to 169 (MRLDNILFRL…LPKHLTFHTL (81 aa)) is the S4 RNA-binding domain.

Belongs to the universal ribosomal protein uS4 family. In terms of assembly, part of the 30S ribosomal subunit. Contacts protein S5. The interaction surface between S4 and S5 is involved in control of translational fidelity.

The protein resides in the plastid. It localises to the chloroplast. One of the primary rRNA binding proteins, it binds directly to 16S rRNA where it nucleates assembly of the body of the 30S subunit. Its function is as follows. With S5 and S12 plays an important role in translational accuracy. The chain is Small ribosomal subunit protein uS4c (rps4) from Gossypium hirsutum (Upland cotton).